The primary structure comprises 420 residues: UDP-N-acetyl-D-mannosamine dehydrogenase (420 aa).

Residues Tyr13, Ile14, Asp33, Thr85, and Thr126 each contribute to the NAD(+) site. Residues Arg160, Val161, Lys212, Asn216, Arg219, His250, Arg252, and Gly263 each coordinate UDP-N-acetyl-alpha-D-mannosaminouronate. The Proton donor/acceptor role is filled by Lys212. Cys266 serves as the catalytic Nucleophile. UDP-N-acetyl-alpha-D-mannosaminouronate is bound by residues Phe330 and Lys331. Residue Arg338 participates in NAD(+) binding. A UDP-N-acetyl-alpha-D-mannosaminouronate-binding site is contributed by Lys416.

The protein belongs to the UDP-glucose/GDP-mannose dehydrogenase family. WecC subfamily. Homodimer.

The catalysed reaction is UDP-N-acetyl-alpha-D-mannosamine + 2 NAD(+) + H2O = UDP-N-acetyl-alpha-D-mannosaminouronate + 2 NADH + 3 H(+). The protein operates within bacterial outer membrane biogenesis; enterobacterial common antigen biosynthesis. In terms of biological role, catalyzes the four-electron oxidation of UDP-N-acetyl-D-mannosamine (UDP-ManNAc), reducing NAD(+) and releasing UDP-N-acetylmannosaminuronic acid (UDP-ManNAcA). The polypeptide is UDP-N-acetyl-D-mannosamine dehydrogenase (Shigella flexneri).